The chain runs to 328 residues: Nickel import system permease protein NikB (328 aa).

A run of 6 helical transmembrane segments spans residues 11–31, 104–124, 139–159, 170–190, 229–249, and 279–299; these read LMQMIVVLFVISTLTFILMKL, LLISFSTLVVSLCISIPLGII, VISTLSISLPAFFIGIILLFI, ILSQFILPVITLSLGMCAYII, ILPIIPLLGISLGSLIGGTVV, and VLFIGFFVVIINTIADLLTLL. In terms of domain architecture, ABC transmembrane type-1 spans 100–297; the sequence is APITLLISFS…IINTIADLLT (198 aa).

Belongs to the binding-protein-dependent transport system permease family. OppBC subfamily. As to quaternary structure, the complex is composed of two ATP-binding proteins (NikD and NikE), two transmembrane proteins (NikB and NikC) and a solute-binding protein (NikA).

The protein resides in the cell membrane. In terms of biological role, part of the ABC transporter complex NikABCDE (Opp2) involved in nickel import. Probably responsible for the translocation of the substrate across the membrane. In Staphylococcus aureus (strain USA300), this protein is Nickel import system permease protein NikB.